Reading from the N-terminus, the 337-residue chain is Delta-aminolevulinic acid dehydratase (337 aa).

Lysine 205 (schiff-base intermediate with substrate) is an active-site residue. The 5-aminolevulinate site is built by arginine 215 and lysine 229. Mg(2+) is bound at residue glutamate 245. Lysine 260 acts as the Schiff-base intermediate with substrate in catalysis. Positions 286 and 324 each coordinate 5-aminolevulinate.

It belongs to the ALAD family. In terms of assembly, homooctamer; formed by oligomerization of dimers. The cofactor is Mg(2+).

It catalyses the reaction 2 5-aminolevulinate = porphobilinogen + 2 H2O + H(+). Its pathway is porphyrin-containing compound metabolism; protoporphyrin-IX biosynthesis; coproporphyrinogen-III from 5-aminolevulinate: step 1/4. With respect to regulation, stimulated by magnesium ions. In terms of biological role, catalyzes an early step in the biosynthesis of tetrapyrroles. Binds two molecules of 5-aminolevulinate per subunit, each at a distinct site, and catalyzes their condensation to form porphobilinogen. This is Delta-aminolevulinic acid dehydratase (hemB) from Pseudomonas aeruginosa (strain ATCC 15692 / DSM 22644 / CIP 104116 / JCM 14847 / LMG 12228 / 1C / PRS 101 / PAO1).